The chain runs to 79 residues: Small ribosomal subunit protein bS16 (79 aa).

Belongs to the bacterial ribosomal protein bS16 family.

This is Small ribosomal subunit protein bS16 from Solidesulfovibrio magneticus (strain ATCC 700980 / DSM 13731 / RS-1) (Desulfovibrio magneticus).